Reading from the N-terminus, the 718-residue chain is Phospholipid phosphatase-related protein type 3 (718 aa).

Transmembrane regions (helical) follow at residues 18-38 (LPCFYFVELPIVASSIVSLYF), 70-90 (LIPLLMLLSLAFAAPAASIMV), and 133-153 (FVGVHVFGLCATALVTDVIQL). Asn-169 is a glycosylation site (N-linked (GlcNAc...) asparagine). A run of 3 helical transmembrane segments spans residues 207–227 (HATLSAFAAVYVSMYFNSVIS), 233–253 (LKPILVFAFAIAAGVCGLTQI), and 263–283 (VYAGFLIGAGIAAYLACHAVG). The tract at residues 313–347 (SVYQQNKSVSTDELGPPGRLEGAPRPVAREKTSLG) is disordered. A compositionally biased stretch (polar residues) spans 314-323 (VYQQNKSVST). N-linked (GlcNAc...) asparagine glycosylation occurs at Asn-318. Phosphoserine occurs at positions 322 and 353. Position 376 is a phosphothreonine (Thr-376). Residues 416-488 (LEGRGLGLPD…GPRVILPPRA (73 aa)) are disordered. At Ser-428 the chain carries Phosphoserine. Positions 439-462 (MAEEEEEEEDEEEEEEEEEEEDEG) are enriched in acidic residues. Ser-508 carries the post-translational modification Phosphoserine. Residues 545-571 (APGAPGPKAAETASSSSASSDSSQYRS) are compositionally biased toward low complexity. Positions 545–577 (APGAPGPKAAETASSSSASSDSSQYRSPSDRDS) are disordered. Ser-641 carries the phosphoserine modification. The segment covering 664-680 (GEGLPPLGAADGALGPG) has biased composition (low complexity). Residues 664–702 (GEGLPPLGAADGALGPGSRESTLRRHAGGLGLAEREAEA) form a disordered region.

The protein belongs to the PA-phosphatase related phosphoesterase family.

The protein localises to the membrane. This chain is Phospholipid phosphatase-related protein type 3, found in Homo sapiens (Human).